A 371-amino-acid polypeptide reads, in one-letter code: DNA replication and repair protein RecF (371 aa).

ATP is bound at residue 30 to 37 (GSNGQGKT).

This sequence belongs to the RecF family.

Its subcellular location is the cytoplasm. Functionally, the RecF protein is involved in DNA metabolism; it is required for DNA replication and normal SOS inducibility. RecF binds preferentially to single-stranded, linear DNA. It also seems to bind ATP. The polypeptide is DNA replication and repair protein RecF (Acidothermus cellulolyticus (strain ATCC 43068 / DSM 8971 / 11B)).